A 337-amino-acid chain; its full sequence is Vacuolar protein sorting-associated protein 26B (337 aa).

A disordered region spans residues 311 to 337; it reads SQRFEGTSHPETRPQHSGAAAVEQEQE.

It belongs to the VPS26 family. In terms of assembly, component of the heterotrimeric retromer cargo-selective complex (CSC) which is believed to associate with variable sorting nexins to form functionally distinct retromer complex variants.

The protein resides in the cytoplasm. It localises to the membrane. Its subcellular location is the endosome. Acts as a component of the retromer cargo-selective complex (CSC). The CSC is believed to be the core functional component of retromer or respective retromer complex variants acting to prevent missorting of selected transmembrane cargo proteins into the lysosomal degradation pathway. Retromer mediates retrograde transport of cargo proteins from endosomes to the trans-Golgi network (TGN). The protein is Vacuolar protein sorting-associated protein 26B (vps26b) of Xenopus tropicalis (Western clawed frog).